The primary structure comprises 402 residues: Serine/threonine transporter SstT (402 aa).

A run of 9 helical transmembrane segments spans residues 19–39, 43–63, 86–106, 138–158, 179–199, 212–232, 287–307, 327–347, and 354–374; these read IGVV…AIGL, LFVG…VISA, TFAA…TLIL, AITE…GLAM, VVKW…FTSI, LLIL…NPII, IPLG…ILTL, VVAA…LLLI, and FGIS…VGVI.

Belongs to the dicarboxylate/amino acid:cation symporter (DAACS) (TC 2.A.23) family.

It localises to the cell membrane. The enzyme catalyses L-serine(in) + Na(+)(in) = L-serine(out) + Na(+)(out). It carries out the reaction L-threonine(in) + Na(+)(in) = L-threonine(out) + Na(+)(out). Its function is as follows. Involved in the import of serine and threonine into the cell, with the concomitant import of sodium (symport system). The protein is Serine/threonine transporter SstT of Streptococcus agalactiae serotype Ia (strain ATCC 27591 / A909 / CDC SS700).